Consider the following 309-residue polypeptide: Lactamase-like protein aptB (309 aa).

Residues histidine 97, histidine 99, aspartate 101, and histidine 102 each contribute to the Zn(2+) site. Aspartate 101 acts as the Proton donor/acceptor in catalysis.

Belongs to the metallo-beta-lactamase superfamily. The cofactor is Zn(2+).

The catalysed reaction is 2,3,6,8,9-pentahydroxy-1-oxo-3-(2-oxopropyl)-1,2,3,4-tetrahydroanthracene-2-carboxyl-[ACP] + H2O = 2,3,6,8,9-pentahydroxy-1-oxo-3-(2-oxopropyl)-1,2,3,4-tetrahydroanthracene-2-carboxylate + holo-[ACP] + H(+). Its pathway is secondary metabolite biosynthesis. In terms of biological role, lactamase-like protein; part of the gene cluster that mediates the biosynthesis of asperthecin, an anthraquinone pigment. Polyketide synthase (PKS) aptA catalyzes the formation of the aromatic polyketide from acetyl coenzyme A and seven malonyl coenzyme A molecules. Polyketide is subsequently hydrolyzed by the action of aptB into endocrocin-9-anthrone. Endocrocin-9-anthrone is then oxidized into endocrocin by aptC. Endocrocin is likely to decarboxylate spontaneously to form emodin which explains why there is no decarboxylase in the asperthecin biosynthesis cluster. Finally, aptC or another endogenous oxygenase catalyzes additional oxidation steps to form asperthecin. The sequence is that of Lactamase-like protein aptB from Emericella nidulans (strain FGSC A4 / ATCC 38163 / CBS 112.46 / NRRL 194 / M139) (Aspergillus nidulans).